The primary structure comprises 574 residues: Sulfate adenylyltransferase (574 aa).

Residues 1 to 169 form an N-terminal region; it reads MSNPPHGGVL…VEAINKLNHY (169 aa). The segment at 170 to 394 is catalytic; sequence DYVALRYTPA…LRESSRPRST (225 aa). Gln-197 is a binding site for sulfate. ATP-binding positions include 197–200 and 291–294; these read QTRN and GRDH. Active-site residues include Thr-198, Arg-199, and Asn-200. Arg-199 is a binding site for sulfate. Ala-295 contacts sulfate. Val-333 provides a ligand contact to ATP. The allosteric regulation domain; adenylyl-sulfate kinase-like stretch occupies residues 395–574; it reads QGFTIFLTGY…LETEGFFDRA (180 aa). Residues 434-437, Arg-451, 477-478, and Arg-516 contribute to the 3'-phosphoadenylyl sulfate site; these read DTVR and IA.

The protein in the N-terminal section; belongs to the sulfate adenylyltransferase family. This sequence in the C-terminal section; belongs to the APS kinase family. Homohexamer. Dimer of trimers.

The protein resides in the cytoplasm. The catalysed reaction is sulfate + ATP + H(+) = adenosine 5'-phosphosulfate + diphosphate. It participates in sulfur metabolism; hydrogen sulfide biosynthesis; sulfite from sulfate: step 1/3. Allosterically inhibited by 3'-phosphoadenosine 5'-phosphosulfate (PAPS). Its function is as follows. Catalyzes the first intracellular reaction of sulfate assimilation, forming adenosine-5'-phosphosulfate (APS) from inorganic sulfate and ATP. Plays an important role in sulfate activation as a component of the biosynthesis pathway of sulfur-containing amino acids. This is Sulfate adenylyltransferase from Aspergillus clavatus (strain ATCC 1007 / CBS 513.65 / DSM 816 / NCTC 3887 / NRRL 1 / QM 1276 / 107).